A 199-amino-acid chain; its full sequence is Thymidylate kinase (199 aa).

7–14 is a binding site for ATP; that stretch reads GTEGVGKT.

This sequence belongs to the thymidylate kinase family.

It catalyses the reaction dTMP + ATP = dTDP + ADP. Functionally, phosphorylation of dTMP to form dTDP in both de novo and salvage pathways of dTTP synthesis. This Acinetobacter baumannii (strain AB307-0294) protein is Thymidylate kinase.